The following is a 75-amino-acid chain: UPF0352 protein VSAL_I1058 (75 aa).

The protein belongs to the UPF0352 family.

This is UPF0352 protein VSAL_I1058 from Aliivibrio salmonicida (strain LFI1238) (Vibrio salmonicida (strain LFI1238)).